Here is a 358-residue protein sequence, read N- to C-terminus: Photosystem II protein D1 2 (358 aa).

3 helical membrane-spanning segments follow: residues 28 to 45, 117 to 132, and 141 to 155; these read YVGW…AATT, HFLI…QWEL, and WICV…AAFA. Histidine 117 is a chlorophyll a binding site. Tyrosine 125 is a pheophytin a binding site. 2 residues coordinate [CaMn4O5] cluster: aspartate 169 and glutamate 188. Residues 196–217 form a helical membrane-spanning segment; that stretch reads FHMLGVAGVFGGSLFSAMHGSL. Histidine 197 serves as a coordination point for chlorophyll a. Residues histidine 214 and 263 to 264 contribute to the a quinone site; that span reads SF. Histidine 214 is a Fe cation binding site. Histidine 271 serves as a coordination point for Fe cation. A helical membrane pass occupies residues 273–287; it reads FLAAWPVVGIWFTSM. Residues histidine 331, glutamate 332, aspartate 341, and alanine 343 each coordinate [CaMn4O5] cluster. The propeptide occupies 344-358; that stretch reads ATESTPVALQAPTIG.

This sequence belongs to the reaction center PufL/M/PsbA/D family. As to quaternary structure, PSII is composed of 1 copy each of membrane proteins PsbA, PsbB, PsbC, PsbD, PsbE, PsbF, PsbH, PsbI, PsbJ, PsbK, PsbL, PsbM, PsbT, PsbX, PsbY, PsbZ, Psb30/Ycf12, peripheral proteins PsbO, CyanoQ (PsbQ), PsbU, PsbV and a large number of cofactors. It forms dimeric complexes. It depends on The D1/D2 heterodimer binds P680, chlorophylls that are the primary electron donor of PSII, and subsequent electron acceptors. It shares a non-heme iron and each subunit binds pheophytin, quinone, additional chlorophylls, carotenoids and lipids. D1 provides most of the ligands for the Mn4-Ca-O5 cluster of the oxygen-evolving complex (OEC). There is also a Cl(-1) ion associated with D1 and D2, which is required for oxygen evolution. The PSII complex binds additional chlorophylls, carotenoids and specific lipids. as a cofactor. Tyr-160 forms a radical intermediate that is referred to as redox-active TyrZ, YZ or Y-Z. In terms of processing, C-terminally processed by CtpA; processing is essential to allow assembly of the oxygen-evolving complex and thus photosynthetic growth.

It is found in the cellular thylakoid membrane. The enzyme catalyses 2 a plastoquinone + 4 hnu + 2 H2O = 2 a plastoquinol + O2. In terms of biological role, photosystem II (PSII) is a light-driven water:plastoquinone oxidoreductase that uses light energy to abstract electrons from H(2)O, generating O(2) and a proton gradient subsequently used for ATP formation. It consists of a core antenna complex that captures photons, and an electron transfer chain that converts photonic excitation into a charge separation. The D1/D2 (PsbA/PsbD) reaction center heterodimer binds P680, the primary electron donor of PSII as well as several subsequent electron acceptors. This is Photosystem II protein D1 2 from Synechococcus sp. (strain WH7803).